We begin with the raw amino-acid sequence, 328 residues long: DNA-directed RNA polymerase subunit alpha (328 aa).

Residues 1–231 (MIYQMQMPAK…EHVAFFADFS (231 aa)) are alpha N-terminal domain (alpha-NTD). Residues 252–328 (MRKLLNTKIE…MDITKYQMKG (77 aa)) form an alpha C-terminal domain (alpha-CTD) region.

Belongs to the RNA polymerase alpha chain family. As to quaternary structure, homodimer. The RNAP catalytic core consists of 2 alpha, 1 beta, 1 beta' and 1 omega subunit. When a sigma factor is associated with the core the holoenzyme is formed, which can initiate transcription.

It carries out the reaction RNA(n) + a ribonucleoside 5'-triphosphate = RNA(n+1) + diphosphate. Its function is as follows. DNA-dependent RNA polymerase catalyzes the transcription of DNA into RNA using the four ribonucleoside triphosphates as substrates. The sequence is that of DNA-directed RNA polymerase subunit alpha from Chlorobium phaeovibrioides (strain DSM 265 / 1930) (Prosthecochloris vibrioformis (strain DSM 265)).